A 204-amino-acid polypeptide reads, in one-letter code: Thiamine-phosphate synthase (204 aa).

4-amino-2-methyl-5-(diphosphooxymethyl)pyrimidine contacts are provided by residues 32–36 and Asp-64; that span reads QLRMK. Mg(2+) is bound by residues Asp-65 and Asp-84. A 4-amino-2-methyl-5-(diphosphooxymethyl)pyrimidine-binding site is contributed by Thr-103. A 2-[(2R,5Z)-2-carboxy-4-methylthiazol-5(2H)-ylidene]ethyl phosphate-binding site is contributed by 129 to 131; it reads TTT. Lys-132 contributes to the 4-amino-2-methyl-5-(diphosphooxymethyl)pyrimidine binding site. Gly-165 lines the 2-[(2R,5Z)-2-carboxy-4-methylthiazol-5(2H)-ylidene]ethyl phosphate pocket.

This sequence belongs to the thiamine-phosphate synthase family. Mg(2+) is required as a cofactor.

The enzyme catalyses 2-[(2R,5Z)-2-carboxy-4-methylthiazol-5(2H)-ylidene]ethyl phosphate + 4-amino-2-methyl-5-(diphosphooxymethyl)pyrimidine + 2 H(+) = thiamine phosphate + CO2 + diphosphate. It carries out the reaction 2-(2-carboxy-4-methylthiazol-5-yl)ethyl phosphate + 4-amino-2-methyl-5-(diphosphooxymethyl)pyrimidine + 2 H(+) = thiamine phosphate + CO2 + diphosphate. The catalysed reaction is 4-methyl-5-(2-phosphooxyethyl)-thiazole + 4-amino-2-methyl-5-(diphosphooxymethyl)pyrimidine + H(+) = thiamine phosphate + diphosphate. It participates in cofactor biosynthesis; thiamine diphosphate biosynthesis; thiamine phosphate from 4-amino-2-methyl-5-diphosphomethylpyrimidine and 4-methyl-5-(2-phosphoethyl)-thiazole: step 1/1. Functionally, condenses 4-methyl-5-(beta-hydroxyethyl)thiazole monophosphate (THZ-P) and 2-methyl-4-amino-5-hydroxymethyl pyrimidine pyrophosphate (HMP-PP) to form thiamine monophosphate (TMP). This Bacteroides fragilis (strain ATCC 25285 / DSM 2151 / CCUG 4856 / JCM 11019 / LMG 10263 / NCTC 9343 / Onslow / VPI 2553 / EN-2) protein is Thiamine-phosphate synthase.